We begin with the raw amino-acid sequence, 198 residues long: Peptide deformylase (198 aa).

Residues Cys-123 and His-170 each coordinate Fe cation. The active site involves Glu-171. His-174 serves as a coordination point for Fe cation.

This sequence belongs to the polypeptide deformylase family. It depends on Fe(2+) as a cofactor.

The enzyme catalyses N-terminal N-formyl-L-methionyl-[peptide] + H2O = N-terminal L-methionyl-[peptide] + formate. In terms of biological role, removes the formyl group from the N-terminal Met of newly synthesized proteins. Requires at least a dipeptide for an efficient rate of reaction. N-terminal L-methionine is a prerequisite for activity but the enzyme has broad specificity at other positions. The sequence is that of Peptide deformylase from Mycoplasmopsis pulmonis (strain UAB CTIP) (Mycoplasma pulmonis).